A 114-amino-acid polypeptide reads, in one-letter code: Ribosome-binding factor A (114 aa).

The protein belongs to the RbfA family. As to quaternary structure, monomer. Binds 30S ribosomal subunits, but not 50S ribosomal subunits or 70S ribosomes.

It localises to the cytoplasm. Its function is as follows. One of several proteins that assist in the late maturation steps of the functional core of the 30S ribosomal subunit. Associates with free 30S ribosomal subunits (but not with 30S subunits that are part of 70S ribosomes or polysomes). Required for efficient processing of 16S rRNA. May interact with the 5'-terminal helix region of 16S rRNA. This is Ribosome-binding factor A from Listeria monocytogenes serotype 4b (strain F2365).